The sequence spans 21 residues: Alpha-aminoadipic semialdehyde dehydrogenase (21 aa).

This sequence belongs to the aldehyde dehydrogenase family. As to quaternary structure, homotetramer.

The catalysed reaction is (S)-2-amino-6-oxohexanoate + NADP(+) + H2O = L-2-aminoadipate + NADPH + 2 H(+). It carries out the reaction (S)-2-amino-6-oxohexanoate + NAD(+) + H2O = L-2-aminoadipate + NADH + 2 H(+). This Ctenopharyngodon idella (Grass carp) protein is Alpha-aminoadipic semialdehyde dehydrogenase (aldh7a1).